We begin with the raw amino-acid sequence, 173 residues long: Large ribosomal subunit protein bL12m (173 aa).

The N-terminal 33 residues, 1-33, are a transit peptide targeting the mitochondrion; the sequence is MFRIASRQTRNLRALSSSKNWARSLVNTRSFRA.

The protein belongs to the bacterial ribosomal protein bL12 family. In terms of assembly, component of the mitochondrial large ribosomal subunit (mt-LSU). Mature yeast 74S mitochondrial ribosomes consist of a small (37S) and a large (54S) subunit. The 37S small subunit contains a 15S ribosomal RNA (15S mt-rRNA) and at least 32 different proteins. The 54S large subunit contains a 21S rRNA (21S mt-rRNA) and at least 45 different proteins.

Its subcellular location is the mitochondrion. Functionally, component of the mitochondrial ribosome (mitoribosome), a dedicated translation machinery responsible for the synthesis of mitochondrial genome-encoded proteins, including at least some of the essential transmembrane subunits of the mitochondrial respiratory chain. The mitoribosomes are attached to the mitochondrial inner membrane and translation products are cotranslationally integrated into the membrane. This is Large ribosomal subunit protein bL12m (mrpl12) from Schizosaccharomyces pombe (strain 972 / ATCC 24843) (Fission yeast).